The chain runs to 340 residues: NADH-quinone oxidoreductase subunit H (340 aa).

The next 9 membrane-spanning stretches (helical) occupy residues 9–29, 81–101, 113–133, 158–178, 184–204, 221–240, 245–264, 273–293, and 316–336; these read IWII…VAFI, LIAP…IPFA, LLFL…AGWA, GFAL…GIVL, LWHW…ITAV, IVAG…FFLA, MVLV…LSPF, LFAW…FIFT, and VLIP…EFHW.

This sequence belongs to the complex I subunit 1 family. As to quaternary structure, NDH-1 is composed of 14 different subunits. Subunits NuoA, H, J, K, L, M, N constitute the membrane sector of the complex.

The protein localises to the cell inner membrane. It catalyses the reaction a quinone + NADH + 5 H(+)(in) = a quinol + NAD(+) + 4 H(+)(out). Functionally, NDH-1 shuttles electrons from NADH, via FMN and iron-sulfur (Fe-S) centers, to quinones in the respiratory chain. The immediate electron acceptor for the enzyme in this species is believed to be ubiquinone. Couples the redox reaction to proton translocation (for every two electrons transferred, four hydrogen ions are translocated across the cytoplasmic membrane), and thus conserves the redox energy in a proton gradient. This subunit may bind ubiquinone. The polypeptide is NADH-quinone oxidoreductase subunit H (Coxiella burnetii (strain CbuK_Q154) (Coxiella burnetii (strain Q154))).